We begin with the raw amino-acid sequence, 388 residues long: Sex-determination protein fem-3 (388 aa).

6 repeat units span residues 7-10 (SDDV), 110-113 (ITRF), 141-144 (ITRF), 234-237 (YHTT), 284-287 (YHTT), and 371-374 (SDDV).

As to quaternary structure, component of a complex containing fem-1, fem-2 and fem-3. Interacts with fem-1 and fem-2 (via N-terminus). Part of a E3 ubiquitin-protein ligase complex, at least composed of cul-2, elc-1, tra-1, fem-1, fem-2 and fem-3; mediates the ubiquitination and subsequent proteasomal degradation of tra-1. Interacts with tra-1. Interacts with sel-10. Interacts with tra-2.

Required for male development. In XO (male) animals, fem-3 directs male differentiation in all tissues. In XX (hermaphrodite) animals, it specifies the first 80 or so germ cells to be sperm. Negatively regulates male development when bound to tra-2. Together with fem-2 associates with the CBC(fem-1) E3 ubiquitin-protein ligase complex which mediates the ubiquitination and subsequent proteasomal degradation of tra-1. This is Sex-determination protein fem-3 (fem-3) from Caenorhabditis elegans.